We begin with the raw amino-acid sequence, 418 residues long: Serum response factor homolog A (418 aa).

Disordered regions lie at residues 14-67, 144-170, 301-351, and 388-418; these read LGNV…GKKA, CLNT…LLQQ, RLGK…NNNS, and SSSS…FPPC. Composition is skewed to low complexity over residues 22–39 and 51–61; these read PSSP…PTST and TSEPSSPSTGE. The region spanning 67–127 is the MADS-box domain; it reads AGRRKIKIEF…GHVYTFATAK (61 aa). Low complexity-rich tracts occupy residues 150–170, 306–351, and 388–399; these read NPNS…LLQQ, NNNN…NNNS, and SSSSASSSPASP. Positions 400–418 are enriched in polar residues; that stretch reads NQFNYSNHSMPLNNQFPPC.

It localises to the nucleus. In terms of biological role, required for proper slug migration, spore differentiation and stalk differentiation (under nonbuffered conditions). Could be involved in late events of spore maturation necessary for spore stability. In Dictyostelium discoideum (Social amoeba), this protein is Serum response factor homolog A (srfA).